Consider the following 687-residue polypeptide: Carboxysome assembly protein CcmM (687 aa).

The interval 242-327 (SINSDITNQI…RVVEVIIQRP (86 aa)) is rbcS-like repeat 1, SSUL1. Disordered regions lie at residues 328 to 355 (GDVP…SAVA) and 442 to 476 (VHRP…SSAG). Residues 335-346 (SRGTTTTKALSS) show a composition bias toward polar residues. The rbcS-like repeat 2, SSUL2 stretch occupies residues 366–445 (ANQLRALLHQ…RVAEIVVHRP (80 aa)). Residues 451–472 (GKPSSSSSSVGYKSAPVSSAGG) are compositionally biased toward low complexity. The interval 480 to 562 (PEVIATVRGL…RVLEQIIQRP (83 aa)) is rbcS-like repeat 3, SSUL3. The segment at 565-590 (NVVAGRSPSSSSASTSSSASSNGFGS) is disordered. The span at 568 to 587 (AGRSPSSSSASTSSSASSNG) shows a compositional bias: low complexity. The rbcS-like repeat 4, SSUL4 stretch occupies residues 599 to 687 (SAVRLDNSVV…RVLETIIQRP (89 aa)).

This sequence belongs to the gamma-class carbonic anhydrase family. Probably forms homotrimers. Full length CcmM interacts with CcaA, CcmK1, CcmK2, CcmK4, CcmL, CcmN and itself, while the N-terminus of CcmM (first 249 residues) only interacts with CcaA, CcmM and CcmN. A probable CcmM-CcaA-CcmN complex as well as a CcaA-RuBisCO-CcmM complex can also be isolated. Interacts with full-length CcaA and the first 220 residues of CcaA; surface residues Gln-177 to Gln-188 are responsible in part for binding. Post-translationally, multiple forms of the protein of 73 (full length), 62, 52 (the most predominant form) and 36 kDa are seen even in the presence of protease inhibitors. CcmM52 interacts with CcaA.

It is found in the carboxysome. Functionally, functions as a scaffold protein for the assembly of beta-carboxysomes, initiates carboxysome assembly via its N-terminal domain binding to CcaA, CcmK and CcmL. Binds HCO(3)-, suggesting it may play a role in the activity or regulation of bicarbonate dehydration. Also initiates carboxysome assembly by coalescing RuBisCO (ribulose bisphosphate carboxylase, rbcL-rbcS) via its SSU-like domains. Produced as a full-length and a shorter form; both forms are required for correct carboxysome assembly and growth. Despite its strong similarity to gamma-class carbonic anhydrase (CA) it does not have detectable CA activity. Its function is as follows. Beta-carboxysome assembly initiates when soluble RuBisCO is condensed into a liquid matrix in a pre-carboxysome by the RbcS-like domains of probably both forms of CcmM. CcmN interacts with the N-terminus of full length CcmM, and then recruits the shell proteins (CcmK) via CcmN's encapsulation peptide. CcmM73 also interacts with CcmK proteins and CcmL directly. Shell formation requires CcmK proteins and CcmO. CcmL caps the otherwise elongated carboxysome. Once fully encapsulated carboxysomes are formed, they migrate within the cell probably via interactions with the cytoskeleton. This is Carboxysome assembly protein CcmM from Synechocystis sp. (strain ATCC 27184 / PCC 6803 / Kazusa).